Consider the following 484-residue polypeptide: Chromosomal replication initiator protein DnaA (484 aa).

A domain I, interacts with DnaA modulators region spans residues 1-74 (MEKSKNIWSL…ILTKNGYNNV (74 aa)). Residues 74-139 (VTIVFTNQPP…EEEPTNFKNP (66 aa)) form a domain II region. The tract at residues 140–356 (FLKKRYTFEN…AAVTKLKAYI (217 aa)) is domain III, AAA+ region. ATP-binding residues include Gly184, Gly186, Lys187, and Thr188. Residues 357-484 (DLDNIEIDID…TELMNKIKKN (128 aa)) form a domain IV, binds dsDNA region.

Belongs to the DnaA family. In terms of assembly, oligomerizes as a right-handed, spiral filament on DNA at oriC.

Its subcellular location is the cytoplasm. Its function is as follows. Plays an essential role in the initiation and regulation of chromosomal replication. ATP-DnaA binds to the origin of replication (oriC) to initiate formation of the DNA replication initiation complex once per cell cycle. Binds the DnaA box (a 9 base pair repeat at the origin) and separates the double-stranded (ds)DNA. Forms a right-handed helical filament on oriC DNA; dsDNA binds to the exterior of the filament while single-stranded (ss)DNA is stabiized in the filament's interior. The ATP-DnaA-oriC complex binds and stabilizes one strand of the AT-rich DNA unwinding element (DUE), permitting loading of DNA polymerase. After initiation quickly degrades to an ADP-DnaA complex that is not apt for DNA replication. Binds acidic phospholipids. The sequence is that of Chromosomal replication initiator protein DnaA from Borrelia garinii subsp. bavariensis (strain ATCC BAA-2496 / DSM 23469 / PBi) (Borreliella bavariensis).